Consider the following 396-residue polypeptide: Elongation factor Tu (396 aa).

The region spanning 10-206 (KPHVNIGTIG…AVDESVPDPV (197 aa)) is the tr-type G domain. Positions 19 to 26 (GHVDHGKT) are G1. Residue 19-26 (GHVDHGKT) participates in GTP binding. Thr26 contributes to the Mg(2+) binding site. The segment at 62 to 66 (GITIN) is G2. The G3 stretch occupies residues 83 to 86 (DAPG). Residues 83-87 (DAPGH) and 138-141 (NKAD) each bind GTP. The tract at residues 138 to 141 (NKAD) is G4. Residues 176 to 178 (SGL) are G5.

Belongs to the TRAFAC class translation factor GTPase superfamily. Classic translation factor GTPase family. EF-Tu/EF-1A subfamily. In terms of assembly, monomer.

It localises to the cytoplasm. The enzyme catalyses GTP + H2O = GDP + phosphate + H(+). Functionally, GTP hydrolase that promotes the GTP-dependent binding of aminoacyl-tRNA to the A-site of ribosomes during protein biosynthesis. The sequence is that of Elongation factor Tu from Arthrobacter sp. (strain FB24).